A 432-amino-acid polypeptide reads, in one-letter code: MTVYHFVGIKGTGMSPLAQILHDNGYNVQGSDIEKYIFTQTALEERNIPIYPFDPENIKPGMTVIAGNAFPDTHPEIEKAQAEGLPVVRYHKFLGDYLKKFTSIAVTGAHGKTSTTGLLSHVIKKAKPTSYLIGDGTGKGCENSEYFVLEACEYRRHFLSYQPDYAIMTNIDFDHPDYFANIDDVFDAFQTMALQVNKGIIACGDDEYLMKIHANVPVVYYGFAEENDFQARNVIKNTEGTTFDVFVRNTFYDTFYIPAYGSHNVLNALAVIALCHYEQVDVDIIKEGLQTFGGVKRRFNEKHAGSQVLIDDYAHHPTEITVTIEAARQKYPERDIVAVFQPHTFTRTQSFLNEFAESLKKADYVYLCDIFGSARENAGKLTIGDLQEKIPQAKLIDENDTSILKEHENAVLIFMGAGDIQKYLRAYENVLA.

G108–S114 provides a ligand contact to ATP.

The protein belongs to the MurCDEF family.

Its subcellular location is the cytoplasm. The enzyme catalyses UDP-N-acetyl-alpha-D-muramate + L-alanine + ATP = UDP-N-acetyl-alpha-D-muramoyl-L-alanine + ADP + phosphate + H(+). Its pathway is cell wall biogenesis; peptidoglycan biosynthesis. In terms of biological role, cell wall formation. This is UDP-N-acetylmuramate--L-alanine ligase from Bacillus licheniformis (strain ATCC 14580 / DSM 13 / JCM 2505 / CCUG 7422 / NBRC 12200 / NCIMB 9375 / NCTC 10341 / NRRL NRS-1264 / Gibson 46).